Here is a 66-residue protein sequence, read N- to C-terminus: Large ribosomal subunit protein uL29 (66 aa).

This sequence belongs to the universal ribosomal protein uL29 family.

The polypeptide is Large ribosomal subunit protein uL29 (Thermosipho melanesiensis (strain DSM 12029 / CIP 104789 / BI429)).